Reading from the N-terminus, the 215-residue chain is Cardiolipin synthase (CMP-forming) (215 aa).

The next 5 helical transmembrane spans lie at 29–49, 60–80, 117–137, 158–178, and 179–199; these read IPNILSMARLAGVPLFLWLIL, GWALLVLALSGVSDYLDGKLA, LWLTLVLLAREAMLLVMVGIL, LMYAFPLLLLSDGSGWIASLA, and AVFGWAFAGWGTTLYWWAGVL.

This sequence belongs to the CDP-alcohol phosphatidyltransferase class-I family. A divalent metal cation serves as cofactor.

It localises to the cell membrane. The enzyme catalyses a CDP-1,2-diacyl-sn-glycerol + a 1,2-diacyl-sn-glycero-3-phospho-(1'-sn-glycerol) = a cardiolipin + CMP + H(+). Its function is as follows. Catalyzes the synthesis of cardiolipin (CL) (diphosphatidylglycerol) by specifically transferring a phosphatidyl group from CDP-diacylglycerol to phosphatidylglycerol (PG). The polypeptide is Cardiolipin synthase (CMP-forming) (Streptomyces coelicolor (strain ATCC BAA-471 / A3(2) / M145)).